The sequence spans 562 residues: 3-hydroxy-3-methylglutaryl-coenzyme A reductase 2 (562 aa).

2 helical membrane-spanning segments follow: residues 32-56 (ALPL…YFLL) and 77-100 (ICAL…DLIF). The segment at 101-146 (RSSSDDDVWVNDGMIPCNQSLDCREVLPIKPNSVDPPRESELDSVE) is linker. The N-linked (GlcNAc...) asparagine glycan is linked to asparagine 118. The interval 147 to 562 (DEEIVKLVID…DIGPSSQVNR (416 aa)) is catalytic. Glutamate 240 (charge relay system) is an active-site residue. A glycan (N-linked (GlcNAc...) asparagine) is linked at asparagine 304. Active-site charge relay system residues include lysine 372 and aspartate 448. Histidine 544 acts as the Proton donor in catalysis. Asparagine 548 carries N-linked (GlcNAc...) asparagine glycosylation. Serine 550 carries the post-translational modification Phosphoserine.

The protein belongs to the HMG-CoA reductase family. Restricted to young seedlings, roots, and inflorescences. Expressed in root tips, shoot apex, secretory zone of the stigma, microspores, mature pollen grains, gynoecium vascular tissue and fertilized ovules.

The protein resides in the endoplasmic reticulum membrane. The catalysed reaction is (R)-mevalonate + 2 NADP(+) + CoA = (3S)-3-hydroxy-3-methylglutaryl-CoA + 2 NADPH + 2 H(+). It participates in metabolic intermediate biosynthesis; (R)-mevalonate biosynthesis; (R)-mevalonate from acetyl-CoA: step 3/3. With respect to regulation, regulated at the post-translational level in response to alterations of the sphingolipid and the sterol biosynthetic pathways. Catalyzes the synthesis of mevalonate. The specific precursor of all isoprenoid compounds present in plants. This chain is 3-hydroxy-3-methylglutaryl-coenzyme A reductase 2 (HMG2), found in Arabidopsis thaliana (Mouse-ear cress).